The chain runs to 880 residues: Probable dipeptidyl-aminopeptidase B (880 aa).

Residues 1–26 (MPRQRAPKEEEAELLTKQERSARSSE) show a composition bias toward basic and acidic residues. The tract at residues 1-71 (MPRQRAPKEE…KYTDEDDEAQ (71 aa)) is disordered. Topologically, residues 1-93 (MPRQRAPKEE…PISVDKKTRR (93 aa)) are cytoplasmic. Residues 30–40 (DTSISSISTTS) show a composition bias toward low complexity. The helical; Signal-anchor for type II membrane protein transmembrane segment at 94-114 (WLWIVGIACVTGWALALVFFL) threads the bilayer. At 115 to 880 (MSGSYKHVST…AQVDARMERR (766 aa)) the chain is on the vacuolar side. The N-linked (GlcNAc...) asparagine glycan is linked to asparagine 533. The active-site Charge relay system is serine 724. Asparagine 778 carries N-linked (GlcNAc...) asparagine glycosylation. Residues aspartate 801 and histidine 834 each act as charge relay system in the active site.

This sequence belongs to the peptidase S9B family.

It is found in the vacuole membrane. The catalysed reaction is Release of an N-terminal dipeptide, Xaa-Yaa-|-Zaa-, from a polypeptide, preferentially when Yaa is Pro, provided Zaa is neither Pro nor hydroxyproline.. In terms of biological role, type IV dipeptidyl-peptidase which removes N-terminal dipeptides sequentially from polypeptides having unsubstituted N-termini provided that the penultimate residue is proline. In Pyrenophora tritici-repentis (strain Pt-1C-BFP) (Wheat tan spot fungus), this protein is Probable dipeptidyl-aminopeptidase B (dapB).